Consider the following 281-residue polypeptide: Cell growth regulator with EF hand domain protein 1 (281 aa).

Positions 1–21 (MFQWLMQALMLPLLLLPLGRA) are cleaved as a signal peptide. 2 EF-hand domains span residues 71–106 (DREQ…ALAP) and 115–150 (PVIL…PKHT). Ca(2+) is bound by residues aspartate 84, aspartate 86, asparagine 88, glutamine 90, glutamate 95, aspartate 128, aspartate 130, aspartate 132, and glutamate 139. The interval 148-281 (KHTESLPPAL…HSIQLENDEI (134 aa)) is disordered. Residues 168-183 (LLANSPLQSETQQSLG) show a composition bias toward polar residues. Over residues 184 to 213 (TKEEIRGQVEAKRASLEPEQEAGHQTEGKV) the composition is skewed to basic and acidic residues. Serine 217 and serine 228 each carry phosphoserine. Basic and acidic residues predominate over residues 237–256 (EGAEEQVEIKDNEGEAKELL).

Post-translationally, probably digested extracellularly by an unknown serine protease generating extremely hydrophobic bioactive peptides.

Its subcellular location is the secreted. Its function is as follows. Mediates cell-cell adhesion in a calcium-dependent manner. Able to inhibit growth in several cell lines. The sequence is that of Cell growth regulator with EF hand domain protein 1 from Mus musculus (Mouse).